The following is a 303-amino-acid chain: Methionyl-tRNA formyltransferase (303 aa).

A (6S)-5,6,7,8-tetrahydrofolate-binding site is contributed by Ser-110–Pro-113.

The protein belongs to the Fmt family.

It catalyses the reaction L-methionyl-tRNA(fMet) + (6R)-10-formyltetrahydrofolate = N-formyl-L-methionyl-tRNA(fMet) + (6S)-5,6,7,8-tetrahydrofolate + H(+). Functionally, attaches a formyl group to the free amino group of methionyl-tRNA(fMet). The formyl group appears to play a dual role in the initiator identity of N-formylmethionyl-tRNA by promoting its recognition by IF2 and preventing the misappropriation of this tRNA by the elongation apparatus. This is Methionyl-tRNA formyltransferase from Ehrlichia ruminantium (strain Gardel).